Consider the following 165-residue polypeptide: Cytochrome c-type biogenesis protein CcmE (165 aa).

Over Met-1–Arg-7 the chain is Cytoplasmic. Residues Leu-8–Ala-28 traverse the membrane as a helical; Signal-anchor for type II membrane protein segment. Residues Phe-29 to Arg-165 are Periplasmic-facing. The heme site is built by His-124 and Tyr-128. The span at Gln-144–Gly-154 shows a compositional bias: low complexity. Positions Gln-144 to Arg-165 are disordered.

The protein belongs to the CcmE/CycJ family.

The protein localises to the cell inner membrane. Heme chaperone required for the biogenesis of c-type cytochromes. Transiently binds heme delivered by CcmC and transfers the heme to apo-cytochromes in a process facilitated by CcmF and CcmH. In Rhizobium etli (strain CIAT 652), this protein is Cytochrome c-type biogenesis protein CcmE.